The chain runs to 316 residues: 4-hydroxy-3-methylbut-2-enyl diphosphate reductase (316 aa).

Residue C18 coordinates [4Fe-4S] cluster. The (2E)-4-hydroxy-3-methylbut-2-enyl diphosphate site is built by H47 and H80. Dimethylallyl diphosphate-binding residues include H47 and H80. Positions 47 and 80 each coordinate isopentenyl diphosphate. A [4Fe-4S] cluster-binding site is contributed by C102. Residue H130 participates in (2E)-4-hydroxy-3-methylbut-2-enyl diphosphate binding. H130 provides a ligand contact to dimethylallyl diphosphate. H130 serves as a coordination point for isopentenyl diphosphate. E132 acts as the Proton donor in catalysis. T171 serves as a coordination point for (2E)-4-hydroxy-3-methylbut-2-enyl diphosphate. Residue C201 participates in [4Fe-4S] cluster binding. 4 residues coordinate (2E)-4-hydroxy-3-methylbut-2-enyl diphosphate: S229, S230, N231, and S274. Positions 229, 230, 231, and 274 each coordinate dimethylallyl diphosphate. S229, S230, N231, and S274 together coordinate isopentenyl diphosphate.

Belongs to the IspH family. [4Fe-4S] cluster is required as a cofactor.

The enzyme catalyses isopentenyl diphosphate + 2 oxidized [2Fe-2S]-[ferredoxin] + H2O = (2E)-4-hydroxy-3-methylbut-2-enyl diphosphate + 2 reduced [2Fe-2S]-[ferredoxin] + 2 H(+). It catalyses the reaction dimethylallyl diphosphate + 2 oxidized [2Fe-2S]-[ferredoxin] + H2O = (2E)-4-hydroxy-3-methylbut-2-enyl diphosphate + 2 reduced [2Fe-2S]-[ferredoxin] + 2 H(+). It participates in isoprenoid biosynthesis; dimethylallyl diphosphate biosynthesis; dimethylallyl diphosphate from (2E)-4-hydroxy-3-methylbutenyl diphosphate: step 1/1. The protein operates within isoprenoid biosynthesis; isopentenyl diphosphate biosynthesis via DXP pathway; isopentenyl diphosphate from 1-deoxy-D-xylulose 5-phosphate: step 6/6. Functionally, catalyzes the conversion of 1-hydroxy-2-methyl-2-(E)-butenyl 4-diphosphate (HMBPP) into a mixture of isopentenyl diphosphate (IPP) and dimethylallyl diphosphate (DMAPP). Acts in the terminal step of the DOXP/MEP pathway for isoprenoid precursor biosynthesis. This is 4-hydroxy-3-methylbut-2-enyl diphosphate reductase from Ruegeria sp. (strain TM1040) (Silicibacter sp.).